The sequence spans 160 residues: MNIVALHVVLYQPEIPANTGNIARTCAATNTTLHLIRPLGFSTDDKMLKRAGLDYWEFVNVVYHDSLEELFEAYKKGKFFFITKFGQQPHTSFDYTDLDEDYFFVFGRETSGLPKDLIQNNMDRCLRLPMTEHVRSLNLSNTAAILVYEALRQQNYRDLK.

Positions 82, 107, 128, and 136 each coordinate S-adenosyl-L-methionine.

The protein belongs to the class IV-like SAM-binding methyltransferase superfamily. RNA methyltransferase TrmH family. TrmL subfamily.

Its subcellular location is the cytoplasm. It catalyses the reaction cytidine(34) in tRNA + S-adenosyl-L-methionine = 2'-O-methylcytidine(34) in tRNA + S-adenosyl-L-homocysteine + H(+). The catalysed reaction is 5-carboxymethylaminomethyluridine(34) in tRNA(Leu) + S-adenosyl-L-methionine = 5-carboxymethylaminomethyl-2'-O-methyluridine(34) in tRNA(Leu) + S-adenosyl-L-homocysteine + H(+). Functionally, could methylate the ribose at the nucleotide 34 wobble position in tRNA. This is Putative tRNA (cytidine(34)-2'-O)-methyltransferase (cspR) from Bacillus subtilis (strain 168).